Reading from the N-terminus, the 175-residue chain is NADH-quinone oxidoreductase subunit I 2 (175 aa).

4Fe-4S ferredoxin-type domains lie at 50-82 (HVLQ…IEAA) and 98-127 (KVYN…HGHG). Residues Cys62, Cys65, Cys68, Cys72, Cys107, Cys110, Cys113, and Cys117 each contribute to the [4Fe-4S] cluster site.

It belongs to the complex I 23 kDa subunit family. In terms of assembly, NDH-1 is composed of 14 different subunits. Subunits NuoA, H, J, K, L, M, N constitute the membrane sector of the complex. It depends on [4Fe-4S] cluster as a cofactor.

The protein resides in the cell inner membrane. It catalyses the reaction a quinone + NADH + 5 H(+)(in) = a quinol + NAD(+) + 4 H(+)(out). Its function is as follows. NDH-1 shuttles electrons from NADH, via FMN and iron-sulfur (Fe-S) centers, to quinones in the respiratory chain. The immediate electron acceptor for the enzyme in this species is believed to be ubiquinone. Couples the redox reaction to proton translocation (for every two electrons transferred, four hydrogen ions are translocated across the cytoplasmic membrane), and thus conserves the redox energy in a proton gradient. This is NADH-quinone oxidoreductase subunit I 2 from Koribacter versatilis (strain Ellin345).